Here is a 260-residue protein sequence, read N- to C-terminus: Tropinone reductase 2 (260 aa).

S18–R41 contributes to the NADP(+) binding site. S146 contributes to the substrate binding site. Residue Y159 is the Proton acceptor of the active site. I192–L196 serves as a coordination point for NADP(+).

The protein belongs to the short-chain dehydrogenases/reductases (SDR) family. As to quaternary structure, homodimer.

The enzyme catalyses pseudotropine + NADP(+) = tropinone + NADPH + H(+). It participates in alkaloid biosynthesis; tropane alkaloid biosynthesis. Catalyzes the stereospecific reduction of tropinone to pseudotropine. The sequence is that of Tropinone reductase 2 (TR2) from Datura stramonium (Jimsonweed).